Consider the following 382-residue polypeptide: O-methyltransferase okaF (382 aa).

The S-adenosyl-L-methionine site is built by glutamate 249 and arginine 287. The active-site Proton acceptor is the histidine 291.

The protein belongs to the class I-like SAM-binding methyltransferase superfamily. Cation-independent O-methyltransferase family.

It catalyses the reaction 3-desmethyl okaramine B + S-adenosyl-L-methionine = okaramine B + S-adenosyl-L-homocysteine + H(+). The protein operates within alkaloid biosynthesis. Its function is as follows. O-methyltransferase; part of the gene cluster that mediates the biosynthesis of okaramine B, a prenylated indole alkaloid that possesses an unusual octacyclic ring system, including a four-membered azetidine ring and an eight-membered azocine ring, and that exhibits insecticidal activity against silkworm larvae. Within the pathway, okaF catalyzes the last step which is the methylation of 3-desmethyl okaramine B to produce okaramine B. With okaG, OkaF is also able to produce okaramine D from okaramine E. The biosynthesis begins with the NRPS okaA that condenses two tryptophan molecules into cyclo(L-Trp-L-Trp). Prenylation by the prenyltransferase okaC then leads to the formation of cyclo(N8-(alpha,alpha-dimethylallyl)-L-Trp-6a-(alpha,alpha-dime-thylallyl)-L-Trp). This is followed by indole 2,3-epoxidation by the FAD-dependent monooxygenase okaB to facilitate the formation of the hexahydropyrrolo[2,3-b]indole (HPI) moiety of okaramine C. The cytochrome P450 monooxygenase okaD then likely catalyzes formation of the eight-membered ring of okaramine A. The dioxygenase okaE further forms the unusual 2-dimethyl-3-methyl-azetidine ring to yield 12-deshydroxyl okaramine E, as well as the hydroxylation of 12-deshydroxyl okaramine E to produce okaramine E. The cytochrome P450 monoxygenase okaG converts 12-deshydroxyl okaramine E into 3-desmethyl okaramine B which is further methylated by the methyltransferase okaF into okaramine B. In a shunt pathway, okaG and okaF together are also able to convert okaramine E into okaramine D. Okaramine H is produced by nonenzymatic conversion from okaramine A. This Penicillium ochrochloron protein is O-methyltransferase okaF.